The chain runs to 96 residues: Large ribosomal subunit protein bL21 (96 aa).

The protein belongs to the bacterial ribosomal protein bL21 family. As to quaternary structure, part of the 50S ribosomal subunit. Contacts protein L20.

In terms of biological role, this protein binds to 23S rRNA in the presence of protein L20. This is Large ribosomal subunit protein bL21 from Chlorobium chlorochromatii (strain CaD3).